The sequence spans 411 residues: Diels-Alderase ffsF (411 aa).

Residues methionine 1–serine 17 form the signal peptide.

Belongs to the Diels-Alderase family.

The protein operates within mycotoxin biosynthesis. Its function is as follows. Diels-Alderase; part of the gene cluster that mediates the biosynthesis of the cytotoxic leucine-containing cytochalasans, including aspochalasin C, aspochalasin E, TMC-169, flavichalasine F, aspergillin PZ, aspochalasin M and flavichalasine G. The first step in the pathway is catalyzed by the hybrid PKS-NRPS ffsA that utilizes 8 units of malonyl-CoA to iteratively assemble the octaketide chain before addition of L-leucine by the C-terminal NRPS modules. Because ffsA lacks a designated enoylreductase (ER) domain, the required activity is provided the enoyl reductase fssC. The methyltransferase (MT) domain of ffsA catalyzes the alpha-methylation at C10 and C14 using S-adenosyl-L-methionine as the methyl-donating cosubstrate. Reduction by the hydrolyase ffsE, followed by dehydration and intra-molecular Diels-Alder cyclization by the Diels-Alderase ffsF then yield the required isoindolone-fused macrocycle. A number of oxidative steps catalyzed by the tailoring cytochrome P450 monooxygenase ffsD, the FAD-linked oxidoreductase ffsJ and the short-chain dehydrogenase/reductase ffsI, are further required to afford the final products. The chain is Diels-Alderase ffsF from Aspergillus flavipes.